We begin with the raw amino-acid sequence, 942 residues long: PH and SEC7 domain-containing protein C11E3.11c (942 aa).

A compositionally biased stretch (polar residues) spans 1–18 (MSRNASNAYLKNGNSTPS). Disordered stretches follow at residues 1–128 (MSRN…TRLN) and 259–308 (SRNL…ETTR). The segment covering 24–40 (PSSLSQRSKTSTRSSKP) has biased composition (low complexity). Polar residues-rich tracts occupy residues 50 to 60 (WFKNESSSRHP), 90 to 125 (ASMS…SSRT), 271 to 284 (YGNS…SSNY), and 292 to 305 (NRQS…STSE). An SEC7 domain is found at 295–497 (SSLSIPKSTS…LSSYKSFASN (203 aa)). One can recognise a PH domain in the interval 681 to 804 (PYIKQGILKF…WIDALNYWAA (124 aa)).

The sequence is that of PH and SEC7 domain-containing protein C11E3.11c from Schizosaccharomyces pombe (strain 972 / ATCC 24843) (Fission yeast).